A 277-amino-acid polypeptide reads, in one-letter code: Bifunctional protein FolD (277 aa).

Residues 160-162 (GAS), S185, and I226 each bind NADP(+).

The protein belongs to the tetrahydrofolate dehydrogenase/cyclohydrolase family. Homodimer.

It catalyses the reaction (6R)-5,10-methylene-5,6,7,8-tetrahydrofolate + NADP(+) = (6R)-5,10-methenyltetrahydrofolate + NADPH. It carries out the reaction (6R)-5,10-methenyltetrahydrofolate + H2O = (6R)-10-formyltetrahydrofolate + H(+). It participates in one-carbon metabolism; tetrahydrofolate interconversion. In terms of biological role, catalyzes the oxidation of 5,10-methylenetetrahydrofolate to 5,10-methenyltetrahydrofolate and then the hydrolysis of 5,10-methenyltetrahydrofolate to 10-formyltetrahydrofolate. The chain is Bifunctional protein FolD from Ruthia magnifica subsp. Calyptogena magnifica.